Here is a 265-residue protein sequence, read N- to C-terminus: Tryptophan synthase alpha chain (265 aa).

Active-site proton acceptor residues include Glu-41 and Asp-52.

Belongs to the TrpA family. As to quaternary structure, tetramer of two alpha and two beta chains.

The enzyme catalyses (1S,2R)-1-C-(indol-3-yl)glycerol 3-phosphate + L-serine = D-glyceraldehyde 3-phosphate + L-tryptophan + H2O. It participates in amino-acid biosynthesis; L-tryptophan biosynthesis; L-tryptophan from chorismate: step 5/5. In terms of biological role, the alpha subunit is responsible for the aldol cleavage of indoleglycerol phosphate to indole and glyceraldehyde 3-phosphate. This is Tryptophan synthase alpha chain from Bacillus velezensis (strain DSM 23117 / BGSC 10A6 / LMG 26770 / FZB42) (Bacillus amyloliquefaciens subsp. plantarum).